The following is a 4760-amino-acid chain: MKHLASSENMPTPAQDRAPSPSAMQQEIVDMCAQVLGRPITRMRTSKSFVALGGDSLLAIKLMAHCREAGYTISIAKILQTASIEELSRSAECQLISSSGEGPVPDPNRPGEPIATSLSLLNNELVLDQVRNITAEPLEDIQDIFPCSRTQEVFLISQHANPEMYQCVVVAEIKCMKPGLSLNDDRLQNAWICVAQRHPALRTVFIESIQRPGHFDQVIMKHEAVPLECQLSSAQCEESAEGMFSRRVSISKEKGTTGRATILRRSENSAVFRLEVSHALMDGQSFGIIFHDFAQAYLQNELPSPTAFSYDSFVAYQEEIDRESVRAYWSSHLAGAQPTRFPTNGNRKLEDLKTLRFRIELDAAALQKVCLEYDATSANLCQVAWAVVLGSYTGSKDVCFSYVNSGRHAPLSSIENAVGAFVDVMVCRMKLPETAKISQMLSKAKQDVIQGLSHPGSLLFEEKKHGHGVSDLRGNTIITFQMGVRDEESAGSDLQIVMLDEITASDYDISLNIQPCHGGLDIRLDYWLSRIDQEIIESVAESFQTALACMCSDDIPLRDVNVVCTQEIEQLRRRNSYTATEIGSLLHDKVDEQARLCPDALAVQGWDGELTYRALNEEASKLASYLQHLGAQQDILICTCFEKSKWAAISQLAVLKSGAAVVPLGTNQPMKRLEMMITNTGADIVLTTSNFASRFVTLFKHVVVIDGASMAKLPLAATVSCSATPDSLAYVIFTSGSTGVPKGVMLTHDSVSTSLRHSVERLNPGPDTRMLQFSAYTFDAAIYEFFFTWHIGACVCIVSEHDRINRLEPAMGELNVNWALLTPTMAEMISPGQVPSLKHLMLIGEAIKPGVLHRWIDHVELWNGYGPSECSIISSCKLLTRECNTTNIGFPITGAFWVVDATNPDRLAPTGAIGELLIQGSHLARGYLNDEQKTSQAFVPPPAWVSKYAFSGSTRYYRTGDLVQRNKDGSITFVGRRDTQVKLRGQRVEFEDIEQHLKDHDAVVEAAIVLAADGPCQGQLVAVVALEAFISQEMHPKTLSPVDQQQIARAKLQTAILGDWLSDRVPEYMVPTMWIPVTSRLLQTDSGKLDRVRLGRCVDSVDVSWVEAFASAGEELTQEREATTLQLQIRDIWAEILLLSIPQVPINRRSFLSLGGDSILAMKAVSRARTQGITLTVPDILQSKSIAKLTEKLGVPEENFLSYTSASKPFPLSPTQKWYFDRVHPLGSGIRHGYCRSVCLQANQKLAEKHVSTSFSTLVSMHPMLRARFLADAANGWQQQVVGHSDDAYGFAVSHLNGFEEIHDIAESTEQGLNIENGPVFSVQFMHLHAGKEEGKQLLFITGHHLVMDEISLCIIIEDLERLLYQDSTVALVVERPSFQAWVEGIAKTTKEEGPEPTSASLTPGLKPLMSKLDLEFGSLTSNEPVYDETNTKVLQFDEFDTMVLLGNANQALRTEPVELILAALVMSFTTTFPSQCIPVLLEGSRGRSLNHGSIDNSKTVGCFTTTMPLRFPVANMDDAVKSTKQIKNARRNTKFRRLHDSQNRNARNYETISSLNRETMEIFFNFDDSSQQIQEQSTLFKQQLLPRRQKLSTGVQKTRHSEIDVDATILQSRLHVAFHFNHRMNHGSDVERWSCEFPKTLRALVATLLKTPSMLTLSDFPLVELTDQKLKILEGQTLPRVGVQPENVEDMYPCTPMQNGILMSQARSPGMYQTQVVWQLQSPDSRINLDVERIMHAYQTLTDRHPMLRTIFVPRTSNAGDGAFDQIVIRRYRINVVHQVCEQDSVEALLATMTNPSAVDYGDGPNHKFMVYSTPSNLTYGHLVINHALSDGFSLSLLEKELTEAYEGTLTPDSKAPPYSAYLSFLKQRSTKEALQYWINNLESAEACFLPAMVERKIQNESETDIVSLPAPSRRQSTTASLEGVESLRKFSEKHSVTMANVFQLAWALVLSKFVRSDDVLFGYVSSGRDVPVHEAHQIFGPFVNILVSRIKLDWDSSIAESLQSVQKRFFENLGQQRTPLVDIWHALKTGGRGLFNTYLSYRQLSSADGQRSGLFQHTIAILGDSEYDAGVDIVASSNKVSVTLDYLPSFMGHDAATRIVDCLLQTVQSLTQSEAFLLRNVTTTTGQDIRQICQWNSEVPLVTVQHCVHDTVYSKCCLDPSAKAICAWDGDLTYFELDQLGEQLAFYLTSNLSVTPETMIGVCFDKSRWAIVAQLAILKSGGAIVPINPMEPMQRLETILRESGICTLLTTSCYGDRFLEIIPNVVAVDSNSPFFHGAMPTERVHSTANPDNAAVVIHTSGSTGNPKGVVLTHRSIASSLEAQGKIFGLSSRTRTLQFVSYTFDLSIGDIWGTLSHGGCVCVMSEDDRMNNIQGAIQIYGATLVIMTPTVATLLDVSKLPSLETLVLGGEALKPAFVEKHLEARQIKIFNGYGPSECSMITTCNGPIQHKNEAPKIGRPLLGSVWLVDDTDKICPIGAVGEIWVEGPLVARGYLNKKDLTDKGFPVDPPWAASAGLQGKRFYRTGDMARQNAKGDLFYVDRKDWQIKIRGNRVELSEIEHAIKEILSGLQNVAACLVSSNQRGPLIAAVLEQNCDTLGLQADVAGFHFERLSPGFQKELVLLKKALAGVLPSHMIPNLYVPTTRLPLTASGKVNRQALRQSLESFSEQEALHYTLADAAKTLPSSETEKTVRALWAAVLQHELDQVGVEDNFFHLGGDSYLAMRLVASSQADDSRVHFTVSDVLQHPTIRELAHAIDQRSTHSRASDRETARFSLWKEYQELNKSQESGHAKALLDQIAAQCDVPIDDVEDIYPCTPLQEGLMVVTAQQPRAYIARWAFQMPDNINLERFQGAWQTLSRAVPILRTRIVPGRLSGALQVVVRGDCKWHTSHDLDQYLSDDVAQSMAYGTSLIRLAYINHSNGCRDFVWTAHHSIYDGWSLPMLLEALSRIYLFNEVPESFPPYSNFIQYIQAQDLAEATAFWRSELQGNLGEPFPALPKPSYQPEPARIIRCTINVESVNRLVTLASLLRAAWAATVSSHTGGTALFAMPLSGRNAPVKGILDMMAPTVTTVPVRIQVDEKQAVHDYLAAVQQQASNMVPFEHSGLHHVRSMVGRDINPQHLFAIQSAPPGKATFEELLGMKELTLPMDGFDNYALIVECFINSREGASIEILARFDDNVLSHTQVQHLLSRFKHIFGQLSQVSAGNNDNTSSMLMGGLEYISPEEVAQLAILNREVAADAPCLVHDLVLRYSATTPDRPAVCAWDGEMSFQQLDQLSEALANRLVELGVTIESPVMICCDKSKWAVVGILAILRAGGTVVPVRAAPVARLQAIMEATGSRVVVTMSEFISQLQGIADHVVSMDSVPVTKPEIPQGPVKQHPSTKSVSFIMFTSGSTGSPKGIVLEHGSMSIAIQSHVKRFGVNRHTRGFQFASFTFDMSLHDILTPLAGGGCVCLPSEVERVNNLAHAMRRFRVNYSMLTPRVLHTIKPSECPEIRTLLVGGERCDTEQLKLWLPQAKVWHVYGPVECSIISTAAEFTGSDTLSLGLALVGAVWVTNKDNCNQLCPIGAVGELLVEGPLVARGYLRDEAKTSAVFIDYPPWRKQHGLAPNSQSQRMYRTGDLVVQHEDGSLIFVGRADQQLKIRGQRVEVGDIEHHIGLQPEVEDGVVLYPQNGPCRSQLIGLVTLHEHMSATDLSEVQPSSADDLAKAITQTEIIRSRLSDVLPDYMVPNVWISMACLPQSAHHKVDRRKLMDWVQSLDAEYFRRITGAKQEAPEKPTTRTEELMQSVLADVLGLSPEDVSMGRSFLSMGGDSITSMQVVSQCRSRYGLSLHVRDILQSKSITQLAQRATTDAAIAPLLPASDGEFRLSPIQRLFFRSFAARGLQSEDEFRFNQSVCLTVNKHIDTEQIKHAARGVVSAHPMLRARFTVSGKRWRQRIEDDVDASCHVVFHQVENQAELEDVIWAGQRSLSVEQGRVFSVHCIETTTTGSQLLFLVAHHLVVDIVSWQIILRDLDNLIQHPKLTAPVESTTFQHWLQLQASRAQNVGSPHQLVHAQMPIADWSYWGVTPENNTYGHRINEQFILEDCASVLFGDKQPLRSEPVEVLLAALFHSFHQIFPDRAVPTVFNEGHGREPWSDAIDLSNTVGWFTTMTPIHVPVGTSDVVDVLKRTKDLRRSIPERGFAYFTSRFLTRDGQHAFASHDQPEVMFNFGGRYRDDKHSRSLFRMSNEFNSSHISGIGNNVKRIAVFEVEASIQQENLAVTLGFSKNMQNPERITRWIQAYQDSLKTLLCQLSTLPTFLSLADVPLLNITYDDLDRLQSERLPLVGINDIDCIEDIYPCSPAQESILRSQARDSSTFHVRSACEFRAREAVVNPEALIRAWQTVVARHAILRTVCVPPTCDGESFYQAVLKQYEPQVSTVRCETAEDVDEAFKDEGGLRYPKWKPEHQLTLCLTSTGQVFFRLLINHTLVDVSSLQLIMNEVTLAYEDGILDTAAPSFSKYIAFLQESSVSESMKYWTSRLAGAQPHCLPVSATVGDGQSRDNAHLEMSNLEPLWRFRDRYGITIANILQLAWAFVLAKHSGSRDVVFGYVANGRDAPVDGVSHMAGPLINVMVSRIWLGDKQRSVAKTAEQVQNDFMEAFRYQRVSLADIEQVTGLSERQMLHTVVSIVRDPGSRRSSDAGVSVHGQSATSLAEYDVSLNAACGEDAIKLSLEYSSRYPGSVSAKGLLDNLQKAVLDLAENGEASIEEMGLRC.

The span at 1–12 (MKHLASSENMPT) shows a compositional bias: polar residues. A disordered region spans residues 1–24 (MKHLASSENMPTPAQDRAPSPSAM). Positions 19 to 95 (PSPSAMQQEI…ELSRSAECQL (77 aa)) constitute a Carrier 1 domain. Residue Ser-56 is modified to O-(pantetheine 4'-phosphoryl)serine. Condensation stretches follow at residues 142 to 570 (QDIF…EIEQ) and 178 to 571 (PGLS…IEQL). The segment at 591–984 (DEQARLCPDA…GRRDTQVKLR (394 aa)) is adenylation 1. The region spanning 1120–1197 (REATTLQLQI…KLTEKLGVPE (78 aa)) is the Carrier 2 domain. Position 1158 is an O-(pantetheine 4'-phosphoryl)serine (Ser-1158). Condensation regions lie at residues 1210–1654 (FPLS…KTPS) and 1689–2125 (VEDM…NVTT). Positions 2171–2551 (DGDLTYFELD…DRKDWQIKIR (381 aa)) are adenylation 2. In terms of domain architecture, Carrier 3 spans 2684–2762 (LPSSETEKTV…ELAHAIDQRS (79 aa)). An O-(pantetheine 4'-phosphoryl)serine modification is found at Ser-2721. The segment at 2811-3203 (VEDIYPCTPL…RFKHIFGQLS (393 aa)) is condensation 4. The tract at residues 3255–3647 (SATTPDRPAV…GRADQQLKIR (393 aa)) is adenylation 3. The Carrier 4 domain occupies 3783–3857 (TRTEELMQSV…QLAQRATTDA (75 aa)). 2 condensation regions span residues 3869 to 4296 (EFRL…TLLC) and 4340 to 4757 (EDIY…EEMG).

This sequence belongs to the nrps family.

Its pathway is secondary metabolite biosynthesis. Its function is as follows. Nonribosomal peptide synthetase; part of the gene cluster that mediates the biosynthesis of beauveriolides I and III, cyclodepsipeptides acting as inhibitors of the acyl-CoA:cholesterol acyltransferase. The HR-PKS cm3B initiates the biosynthesis of beauveriolides by iteratively catalyzing the formation of the linear polyketide chain. The ATP-dependent acetyl-CoA ligase cm3D converts the polyketide carboxylic acid to a CoA thioester which id shuttled to the first T domain in the NRPS cm3A by the acetyltransferase cm3C. Cm3A contains 13 domains and assembles the polyketide chain, L-phenylalanine, L-alanine, and D-leucine (or D-allo-isoleucine) to form beauveriolide I (or beauveriolide III). The production of both beauveriolides I and III suggests the substrate adaptability of cm3B, using different amino acids as substrates. The protein is Nonribosomal peptide synthetase cm3A of Cordyceps militaris (strain CM01) (Caterpillar fungus).